A 251-amino-acid polypeptide reads, in one-letter code: Derlin-1 (251 aa).

Position 2 is an N-acetylserine (Ser-2). Topologically, residues 2-15 are cytoplasmic; the sequence is SDIGDWFRSIPAIT. A helical membrane pass occupies residues 16–31; the sequence is RYWFAATVAVPLVGKL. The Lumenal portion of the chain corresponds to 32-69; it reads GLISPAYLFLWPEAFLYRFQIWRPITATFYFPVGPGTG. The chain crosses the membrane as a helical span at residues 70–89; that stretch reads FLYLVNLYFLYHYSTRLETG. Over 90–94 the chain is Cytoplasmic; the sequence is AFDGR. Residues 95–115 traverse the membrane as a helical segment; it reads PADYLFMLLFNWICIVITGLA. Residues 116–122 are Lumenal-facing; sequence MDMQLLM. A helical membrane pass occupies residues 123 to 137; it reads IPLIMSVLYVWAQLN. Residues 138-154 lie on the Cytoplasmic side of the membrane; sequence RDMIVSFWFGTRFKACY. A helical membrane pass occupies residues 155–166; it reads LPWVILGFNYII. The Lumenal portion of the chain corresponds to 167–170; that stretch reads GGSV. The helical transmembrane segment at 171–189 threads the bilayer; the sequence is INELIGNLVGHLYFFLMFR. Residues 190 to 251 are Cytoplasmic-facing; it reads YPMDLGGRNF…WGQGFRLGDQ (62 aa). A Phosphoserine modification is found at Ser-201. Residue Thr-202 is modified to Phosphothreonine. Phosphoserine is present on Ser-226. The interval 229–251 is disordered; the sequence is RAADQNGGGGRHNWGQGFRLGDQ. The SHP-box signature appears at 241–248; it reads NWGQGFRL.

The protein belongs to the derlin family. In terms of assembly, homotetramer. The four subunits of the tetramer are arranged in a twofold symmetry. Forms homo- and heterooligomers with DERL2 and DERL3; binding to DERL3 is poorer than that between DERL2 and DERL3. Interacts (via SHP-box motif) with VCP. Interacts with AMFR, SELENOS, SEL1L, SELENOK and SYVN1, as well as with SEL1L-SYVN1 and VCP-SELENOS protein complexes; this interaction is weaker than that observed between DERL2 and these complexes. Interacts with NGLY1 and YOD1. Does not bind to EDEM1. Interacts with DNAJB9. Interacts with RNF103. Interacts with HM13. Interacts with XBP1 isoform 1 (via luminal/ectodomain domain); the interaction obviates the need for ectodomain shedding prior HM13/SPP-mediated XBP1 isoform 1 cleavage. Interacts with the signal recognition particle/SRP and the SRP receptor; in the process of endoplasmic reticulum stress-induced pre-emptive quality control. May interact with UBXN6. Interacts with ZFAND2B; probably through VCP. Interacts with CCDC47. Interacts with C18orf32. May interact with TRAM1. Forms a complex with SVIP and VCP/p97.

Its subcellular location is the endoplasmic reticulum membrane. Its function is as follows. Functional component of endoplasmic reticulum-associated degradation (ERAD) for misfolded lumenal proteins. Forms homotetramers which encircle a large channel traversing the endoplasmic reticulum (ER) membrane. This allows the retrotranslocation of misfolded proteins from the ER into the cytosol where they are ubiquitinated and degraded by the proteasome. The channel has a lateral gate within the membrane which provides direct access to membrane proteins with no need to reenter the ER lumen first. May mediate the interaction between VCP and the misfolded protein. Also involved in endoplasmic reticulum stress-induced pre-emptive quality control, a mechanism that selectively attenuates the translocation of newly synthesized proteins into the endoplasmic reticulum and reroutes them to the cytosol for proteasomal degradation. By controlling the steady-state expression of the IGF1R receptor, indirectly regulates the insulin-like growth factor receptor signaling pathway. In Pongo abelii (Sumatran orangutan), this protein is Derlin-1.